Reading from the N-terminus, the 164-residue chain is MRVILKEDFINLGKEGDTVDVKDGFARNYLLPKGFAVFSNKHNIDIFNQKRRAILKRQETRKKIALELKAKLDKVSLEFVMQSNDGGKLFHSINSLNIADELLKLGFEIERRKIDIHYGTLKTFGIYDVTIKLYEGINAVIKVEIKREEKKKSLKKSKSVAKEV.

Belongs to the bacterial ribosomal protein bL9 family.

Functionally, binds to the 23S rRNA. This chain is Large ribosomal subunit protein bL9, found in Borrelia hermsii (strain HS1 / DAH).